Here is a 632-residue protein sequence, read N- to C-terminus: Mediator of RNA polymerase II transcription subunit 17 (632 aa).

Disordered regions lie at residues 1 to 21 (MSDS…RPDS) and 50 to 72 (EDKH…DLET). Basic and acidic residues predominate over residues 11–21 (PIREKRDRPDS). Positions 58–72 (EEDDEGDKESTDLET) are enriched in acidic residues.

It belongs to the Mediator complex subunit 17 family. As to quaternary structure, component of the Mediator complex.

Its subcellular location is the nucleus. Its function is as follows. Component of the Mediator complex, a coactivator involved in the regulated transcription of nearly all RNA polymerase II-dependent genes. Mediator functions as a bridge to convey information from gene-specific regulatory proteins to the basal RNA polymerase II transcription machinery. Mediator is recruited to promoters by direct interactions with regulatory proteins and serves as a scaffold for the assembly of a functional preinitiation complex with RNA polymerase II and the general transcription factors. This chain is Mediator of RNA polymerase II transcription subunit 17 (srb4), found in Emericella nidulans (strain FGSC A4 / ATCC 38163 / CBS 112.46 / NRRL 194 / M139) (Aspergillus nidulans).